Consider the following 184-residue polypeptide: MFSKSYQITKEMYEARGWQIIKEDELTILAKVNSRENTNPEFAIAKFIKTTQEIKSPPLSQIIDFSSNEYVCVTIICDGSITTNVKKIEQTTKGKVEIFHNKDLQMNITKYHLQPLFNKLLDEEAKDFKKKYIKCKIENGKKIILQSFPSMSKSDPIARFFKYQSGDVIKITNKDGFVSYRIVK.

This sequence belongs to the archaeal Rpo5/eukaryotic RPB5 RNA polymerase subunit family.

Component of the DNA-dependent RNA polymerase that catalyzes the transcription in the cytoplasm of viral DNA into RNA using the four ribonucleoside triphosphates as substrates. The polypeptide is Putative DNA-directed RNA polymerase subunit 454R (Invertebrate iridescent virus 6 (IIV-6)).